We begin with the raw amino-acid sequence, 318 residues long: Isoeugenol synthase 1 (318 aa).

NADP(+) is bound by residues 10-13 (TGYI), 32-43 (ARPLTPDSTPSS), R33, 84-86 (VPM), 109-111 (SEF), K131, and 151-153 (NCF). The active-site Proton donor/acceptor is K131. Substrate is bound at residue P260.

It belongs to the NmrA-type oxidoreductase family. In terms of tissue distribution, mostly expressed in petals, and, to a lower extent, in sepals, stamens and pistils.

The catalysed reaction is (E)-isoeugenol + acetate + NADP(+) = (E)-coniferyl acetate + NADPH. Its pathway is aromatic compound metabolism; phenylpropanoid biosynthesis. Functionally, catalyzes the synthesis of the phenylpropene isoeugenol from coniferyl acetate. Phenylpropenes are the primary constituents of various essential plant oils. They are produced as antimicrobial and antianimal compounds, or as floral attractants of pollinators. Isoeugenol is a characteristic aromatic constituent of spices and a floral volatile compound. In Clarkia breweri (Fairy fans), this protein is Isoeugenol synthase 1.